Consider the following 478-residue polypeptide: MTSRTAPASPVVHVIGAGLAGSEAAWQIARAGVRVVLHEMRPVRTTEAHKTDGLAELVCSNSFRSDDAANNAVGLLHAEMRRLGSLIMQAADANQVPAGGALAVDRDGFSAAVTKALAEHPLIEICREEIDGLPPQEWTNVVIATGPLTSAPLADAIRGLTDESALAFFDAIAPIVHRDSIDMSVAWFQSRYDKVGPGGTGADYLNCPMTREQYDAFVDALIEGEKVDFKDWEKDTPYFDGCLPIEVMAERGRETLRHGPMKPVGLTNPHNPTVKPYAIVQLRQDNKLGTLYNMVGFQTKLKHGAQLRVFRTIPGLENAEFARLGGLHRNTFLNSPKLLDESLRLRASPRLRFAGQMTGCEGYVESASIGLFAGLAAAADLVGQSLAPPPPTTALGALLGHITGGHIETIDAGPRSFQPMNINFGLFPPLANPPTKGPDGKRLRGPEKSVAKKQALSARALADIDAWIAAHLKLPKAA.

16–21 (GAGLAG) contributes to the FAD binding site. A disordered region spans residues 429–448 (PLANPPTKGPDGKRLRGPEK). Over residues 438–448 (PDGKRLRGPEK) the composition is skewed to basic and acidic residues.

It belongs to the MnmG family. TrmFO subfamily. FAD serves as cofactor.

The protein resides in the cytoplasm. The catalysed reaction is uridine(54) in tRNA + (6R)-5,10-methylene-5,6,7,8-tetrahydrofolate + NADH + H(+) = 5-methyluridine(54) in tRNA + (6S)-5,6,7,8-tetrahydrofolate + NAD(+). The enzyme catalyses uridine(54) in tRNA + (6R)-5,10-methylene-5,6,7,8-tetrahydrofolate + NADPH + H(+) = 5-methyluridine(54) in tRNA + (6S)-5,6,7,8-tetrahydrofolate + NADP(+). Its function is as follows. Catalyzes the folate-dependent formation of 5-methyl-uridine at position 54 (M-5-U54) in all tRNAs. This Rhodopseudomonas palustris (strain ATCC BAA-98 / CGA009) protein is Methylenetetrahydrofolate--tRNA-(uracil-5-)-methyltransferase TrmFO.